Here is a 256-residue protein sequence, read N- to C-terminus: Glutamate racemase (256 aa).

Substrate-binding positions include 12–13 (DS) and 44–45 (YG). The active-site Proton donor/acceptor is cysteine 75. 76 to 77 (NT) is a binding site for substrate. The active-site Proton donor/acceptor is cysteine 186. 187 to 188 (TH) contacts substrate.

It belongs to the aspartate/glutamate racemases family.

It carries out the reaction L-glutamate = D-glutamate. Its pathway is cell wall biogenesis; peptidoglycan biosynthesis. Provides the (R)-glutamate required for cell wall biosynthesis. This Clostridium acetobutylicum (strain ATCC 824 / DSM 792 / JCM 1419 / IAM 19013 / LMG 5710 / NBRC 13948 / NRRL B-527 / VKM B-1787 / 2291 / W) protein is Glutamate racemase.